We begin with the raw amino-acid sequence, 957 residues long: Histone-lysine N-methyltransferase, H3 lysine-9 specific SUVH3 (957 aa).

Residues 73–243 (GHPPGVALGD…PQVCKFLMHG (171 aa)) form the YDG domain. A disordered region spans residues 182–209 (EAGGGEGGGGGEGGGGAKKGKGGKGGGK). Positions 183–198 (AGGGEGGGGGEGGGGA) are enriched in gly residues. Positions 319–441 (DVSGGQEAVP…HECGDGCSAK (123 aa)) constitute a Pre-SET domain. Residues 455–920 (LPLEVFMTES…QLEELSYNYG (466 aa)) form the SET domain. 3 disordered regions span residues 552-595 (DAAR…GGAE), 611-647 (AAGT…SSGA), and 783-805 (PPAL…GGGG). A compositionally biased stretch (low complexity) spans 560–578 (QQPQQQQPQQQQQQPAAGG). Positions 793 to 805 (GNGGTTGSGGGGG) are enriched in gly residues. Residues 941–957 (FVMQCNCGAVGCIGNLM) form the Post-SET domain.

The protein belongs to the class V-like SAM-binding methyltransferase superfamily. Histone-lysine methyltransferase family. Suvar3-9 subfamily.

The protein localises to the nucleus. Its subcellular location is the chromosome. The enzyme catalyses L-lysyl(9)-[histone H3] + S-adenosyl-L-methionine = N(6)-methyl-L-lysyl(9)-[histone H3] + S-adenosyl-L-homocysteine + H(+). In terms of biological role, histone methyltransferase. Monomethylates specifically 'Lys-9' of histone H3. H3 'Lys-9Me1' (H3K9me1) functions as an epigenetic mark of repressed chromatin. The sequence is that of Histone-lysine N-methyltransferase, H3 lysine-9 specific SUVH3 (SUVH3) from Chlamydomonas reinhardtii (Chlamydomonas smithii).